We begin with the raw amino-acid sequence, 2615 residues long: Probable serine/threonine-protein kinase roco7 (2615 aa).

The segment covering 1 to 13 has biased composition (low complexity); that stretch reads MDGYSSLSSSGNS. 4 disordered regions span residues 1–35, 275–297, 533–623, and 946–998; these read MDGY…NYNQ, STPT…NSNN, QNIN…GGLN, and SSSS…ISEQ. Composition is skewed to low complexity over residues 533 to 560, 567 to 614, and 946 to 996; these read QNIN…SSRS, NSST…NNNN, and SSSS…SNIS. The COR domain maps to 1441-1631; the sequence is SVKEAYARNK…LCIWQNGMVL (191 aa). Residues 1775 to 2042 enclose the Protein kinase domain; it reads LKFGPQLGSG…ERLSTMQKTF (268 aa). ATP is bound by residues 1781 to 1789 and K1802; that span reads LGSGSYANV. D1899 serves as the catalytic Proton acceptor. 2 disordered regions span residues 2061 to 2158 and 2176 to 2209; these read QINQ…SHSG and GIGS…YESG. Composition is skewed to low complexity over residues 2073-2158 and 2182-2209; these read SQAA…SHSG and NQHQ…YESG. WD repeat units follow at residues 2491–2527 and 2533–2574; these read GIIK…LVWD and RMVQ…TTYS.

This sequence belongs to the protein kinase superfamily. TKL Ser/Thr protein kinase family. ROCO subfamily.

It carries out the reaction L-seryl-[protein] + ATP = O-phospho-L-seryl-[protein] + ADP + H(+). It catalyses the reaction L-threonyl-[protein] + ATP = O-phospho-L-threonyl-[protein] + ADP + H(+). This chain is Probable serine/threonine-protein kinase roco7 (roco7), found in Dictyostelium discoideum (Social amoeba).